The sequence spans 117 residues: Large ribosomal subunit protein bL20 (117 aa).

Belongs to the bacterial ribosomal protein bL20 family.

Functionally, binds directly to 23S ribosomal RNA and is necessary for the in vitro assembly process of the 50S ribosomal subunit. It is not involved in the protein synthesizing functions of that subunit. This Rickettsia rickettsii (strain Iowa) protein is Large ribosomal subunit protein bL20.